Here is a 718-residue protein sequence, read N- to C-terminus: Polyribonucleotide nucleotidyltransferase (718 aa).

Mg(2+)-binding residues include aspartate 497 and aspartate 503. The region spanning 564–623 (PRLLTLKIEPEHIGMVIGPGGKTIKGITEQTSCKIDIADDGTVTIASSEGERAERARQMI) is the KH domain. Positions 633-701 (GEVYLGRVTR…SKGRLNLTRL (69 aa)) constitute an S1 motif domain.

This sequence belongs to the polyribonucleotide nucleotidyltransferase family. Interacts with RNase E (rne). The cofactor is Mg(2+).

Its subcellular location is the cytoplasm. The enzyme catalyses RNA(n+1) + phosphate = RNA(n) + a ribonucleoside 5'-diphosphate. Functionally, involved in mRNA degradation. Catalyzes the phosphorolysis of single-stranded polyribonucleotides processively in the 3'- to 5'-direction. This is Polyribonucleotide nucleotidyltransferase from Synechocystis sp. (strain ATCC 27184 / PCC 6803 / Kazusa).